We begin with the raw amino-acid sequence, 229 residues long: Protein MC132 (229 aa).

Interacts with host RELA (via RHD domain), ELOB, ELOC and CUL5; these interactions induce the proteasomal degradation of host RELA.

Its subcellular location is the host cytoplasm. Inhibits host NF-kappa-B activation stimulated by IL-1 and multiple PRR viral detection pathways. Targets host NF-kappa-B component RELA/p65 for ubiquitin-dependent proteasomal degradation. The protein is Protein MC132 (MC132) of Homo sapiens (Human).